Here is a 66-residue protein sequence, read N- to C-terminus: Sodium channel alpha-toxin Acra8 (66 aa).

One can recognise an LCN-type CS-alpha/beta domain in the interval 2-64; that stretch reads RDGYIVDDKN…VPIKEKGRCN (63 aa). 4 cysteine pairs are disulfide-bonded: Cys-12-Cys-63, Cys-16-Cys-36, Cys-22-Cys-46, and Cys-26-Cys-48. Asn-64 bears the Asparagine amide mark. A propeptide spanning residues 65-66 is cleaved from the precursor; that stretch reads GR.

The protein belongs to the long (4 C-C) scorpion toxin superfamily. Sodium channel inhibitor family. Alpha subfamily. As to expression, expressed by the venom gland.

It is found in the secreted. Alpha toxins bind voltage-independently at site-3 of sodium channels (Nav) and inhibit the inactivation of the activated channels, thereby blocking neuronal transmission. In Androctonus crassicauda (Arabian fat-tailed scorpion), this protein is Sodium channel alpha-toxin Acra8.